The following is a 334-amino-acid chain: L-lactate dehydrogenase C chain (334 aa).

NAD(+)-binding positions include Gly-30–Lys-58 and Arg-100. The substrate site is built by Arg-107, Asn-139, and Arg-170. Residue Asn-139 coordinates NAD(+). His-194 serves as the catalytic Proton acceptor. A substrate-binding site is contributed by Thr-249.

The protein belongs to the LDH/MDH superfamily. LDH family. In terms of assembly, homotetramer. As to expression, eye and liver.

It is found in the cytoplasm. It carries out the reaction (S)-lactate + NAD(+) = pyruvate + NADH + H(+). Its pathway is fermentation; pyruvate fermentation to lactate; (S)-lactate from pyruvate: step 1/1. The sequence is that of L-lactate dehydrogenase C chain (ldhc) from Fundulus heteroclitus (Killifish).